A 364-amino-acid polypeptide reads, in one-letter code: Isoflavone 4'-O-methyltransferase (364 aa).

Residues 206-209 (VGGG), Asp-230, 230-231 (DQ), 250-251 (DM), and Lys-264 contribute to the S-adenosyl-L-methionine site. His-268 serves as the catalytic Proton acceptor.

This sequence belongs to the class I-like SAM-binding methyltransferase superfamily. Cation-independent O-methyltransferase family. COMT subfamily. In terms of assembly, homodimer.

It carries out the reaction a 4'-hydroxyisoflavone + S-adenosyl-L-methionine = a 4'-methoxyisoflavone + S-adenosyl-L-homocysteine + H(+). The enzyme catalyses (2R,3S)-2,4',7-trihydroxyisoflavanone + S-adenosyl-L-methionine = (2R,3S)-2,7-dihydroxy-4'-methoxyisoflavanone + S-adenosyl-L-homocysteine + H(+). 2-hydroxyisoflavanone 4'-O-methyltransferase involved in the biosynthesis of the phytoalexin medicarpin. Has also an in vitro (+)-6a-hydroxymaackiain-3-0-methyltransferase activity, converting the pterocarpan 6a-hydroxymaackiain into pisatin. No activity with di- or trihydroxylated isoflavones, including daidzein and genistein, or with (-)-medicarpin and maackiain. The dual activity for either 3- or 4'-O-methylation depends upon substrate availability. In Medicago truncatula (Barrel medic), this protein is Isoflavone 4'-O-methyltransferase (HI4'OMT).